Reading from the N-terminus, the 508-residue chain is ATP synthase subunit alpha, chloroplastic (508 aa).

173–180 is an ATP binding site; the sequence is GDRQTGKT.

The protein belongs to the ATPase alpha/beta chains family. As to quaternary structure, F-type ATPases have 2 components, CF(1) - the catalytic core - and CF(0) - the membrane proton channel. CF(1) has five subunits: alpha(3), beta(3), gamma(1), delta(1), epsilon(1). CF(0) has four main subunits: a, b, b' and c.

It is found in the plastid. The protein resides in the chloroplast thylakoid membrane. It carries out the reaction ATP + H2O + 4 H(+)(in) = ADP + phosphate + 5 H(+)(out). Its function is as follows. Produces ATP from ADP in the presence of a proton gradient across the membrane. The alpha chain is a regulatory subunit. The sequence is that of ATP synthase subunit alpha, chloroplastic from Chara vulgaris (Common stonewort).